The primary structure comprises 1083 residues: Protein HOS4 (1083 aa).

Disordered stretches follow at residues 1–233 and 267–328; these read MNET…RKLV and SSLF…YRDS. Phosphoserine occurs at positions 14 and 16. The span at 24–62 shows a compositional bias: basic and acidic residues; it reads TRREELEKISKQETSEEEDTAGKHEQRETLSEEVSDKFP. At threonine 37 the chain carries Phosphothreonine. Serine 67 is subject to Phosphoserine. Over residues 67–85 the composition is skewed to polar residues; it reads SFRSQTTSVHQATQNNLNA. Residues 86-118 show a composition bias toward basic and acidic residues; sequence KESEDLAHKNDASSHEGEVNGDSRPDDVPETNE. The segment covering 135 to 149 has biased composition (polar residues); sequence PNVRNVDIQNHQPFS. Over residues 151–166 the composition is skewed to basic and acidic residues; sequence DQLRAMLKEPKRKTVD. Positions 167–185 are enriched in acidic residues; it reads DFIEEEGLGAVEEEDLSDE. Basic and acidic residues predominate over residues 186–207; the sequence is VLEKNTTEPENVEKDIEYSDSD. Residues 277–293 are compositionally biased toward polar residues; it reads VKETNNNLSNMNSSPAQ. The residue at position 290 (serine 290) is a Phosphoserine. Residues 300-310 show a composition bias toward low complexity; sequence VSRSNDSNKSS. The span at 314–323 shows a compositional bias: basic residues; sequence VSKRPKQKKG. 3 ANK repeats span residues 329 to 359, 363 to 392, and 398 to 427; these read GGRTRLQIACDKGKYDVVKKMIEEGGYDIND, AGNTALHEAALQGHIEIVELLIENGADVNI, and FGDTPLIDASANGHLDVVKYLLKNGADPTI. The tract at residues 472–516 is disordered; sequence AGIHNDKSKNGNNAHTIDQPPFDNTTKAKNEKAADSPSMASNIDE. Over residues 481-496 the composition is skewed to polar residues; it reads NGNNAHTIDQPPFDNT. At serine 507 the chain carries Phosphoserine. 2 ANK repeats span residues 532 to 561 and 593 to 622; these read AGKEKLFKASKEGHLPYVGTYVENGGKIDL and NKTSALMVAVGRGHLGTVKLLLEAGADPTK. Disordered regions lie at residues 661-742 and 762-790; these read HSED…DDNE and DEEKLKSISPLSMEPHSPKKAKSVEISKI. Over residues 665-675 the composition is skewed to acidic residues; it reads NNDDDDDDDNN. At serine 698 the chain carries Phosphoserine. The residue at position 700 (threonine 700) is a Phosphothreonine. The span at 721-740 shows a compositional bias: basic and acidic residues; the sequence is NNDRDVKESTTSDSRKRLDD. Serine 778 is subject to Phosphoserine.

As to quaternary structure, identified in the Set3C complex with HOS2, HST1, SNT1, SIF2, CPR1 and SET3.

In terms of biological role, unknown. Component of the Set3C complex, which is required to repress early/middle sporulation genes during meiosis. This is Protein HOS4 (HOS4) from Saccharomyces cerevisiae (strain ATCC 204508 / S288c) (Baker's yeast).